The primary structure comprises 206 residues: Small ribosomal subunit protein uS4c (206 aa).

The region spanning 94 to 152 (MRLDNIVFRLGMAPTIPAARQLVNHRHILVNDFTVNIPSYSCKLGDKISVQKRFESKTN) is the S4 RNA-binding domain.

It belongs to the universal ribosomal protein uS4 family. Part of the 30S ribosomal subunit. Contacts protein S5. The interaction surface between S4 and S5 is involved in control of translational fidelity.

It is found in the plastid. The protein resides in the chloroplast. Its function is as follows. One of the primary rRNA binding proteins, it binds directly to 16S rRNA where it nucleates assembly of the body of the 30S subunit. With S5 and S12 plays an important role in translational accuracy. The protein is Small ribosomal subunit protein uS4c (rps4) of Chara vulgaris (Common stonewort).